Reading from the N-terminus, the 237-residue chain is (5-formylfuran-3-yl)methyl phosphate synthase (237 aa).

Residue K29 is the Schiff-base intermediate with substrate of the active site. The active-site Proton acceptor is the K87.

This sequence belongs to the MfnB family.

It catalyses the reaction 2 D-glyceraldehyde 3-phosphate = 4-(hydroxymethyl)-2-furancarboxaldehyde phosphate + phosphate + 2 H2O. Its pathway is cofactor biosynthesis; methanofuran biosynthesis. Catalyzes the formation of 4-(hydroxymethyl)-2-furancarboxaldehyde phosphate (4-HFC-P) from two molecules of glyceraldehyde-3-P (GA-3-P). The chain is (5-formylfuran-3-yl)methyl phosphate synthase from Methanopyrus kandleri (strain AV19 / DSM 6324 / JCM 9639 / NBRC 100938).